Here is a 467-residue protein sequence, read N- to C-terminus: Heat shock factor protein 3 (467 aa).

Residues 16-121 mediate DNA binding; the sequence is VPGFLAKLWA…LLENIKRKVS (106 aa). The hydrophobic repeat HR-A/B stretch occupies residues 128 to 201; it reads LKVCAEDLHK…LSLMRGNYIV (74 aa). The tract at residues 364-389 is hydrophobic repeat HR-C; that stretch reads IQDFLNCIDASLEELQAMLSGKQYSF. The interval 427–449 is disordered; that stretch reads EDLGASERETAGSKGGQEGTESC.

Belongs to the HSF family. As to quaternary structure, homotrimer. Expressed in most tissues. High levels are found in erythrocytes and low levels in liver.

The protein localises to the cytoplasm. It localises to the nucleus. Functionally, DNA-binding protein that specifically binds heat shock promoter elements (HSE) and activates transcription. HSF3 binds DNA constitutively only when the C-terminal region is deleted. In Gallus gallus (Chicken), this protein is Heat shock factor protein 3 (HSF3).